The following is a 214-amino-acid chain: Probable transaldolase (214 aa).

Residue lysine 83 is the Schiff-base intermediate with substrate of the active site.

Belongs to the transaldolase family. Type 3B subfamily.

The protein localises to the cytoplasm. It carries out the reaction D-sedoheptulose 7-phosphate + D-glyceraldehyde 3-phosphate = D-erythrose 4-phosphate + beta-D-fructose 6-phosphate. It functions in the pathway carbohydrate degradation; pentose phosphate pathway; D-glyceraldehyde 3-phosphate and beta-D-fructose 6-phosphate from D-ribose 5-phosphate and D-xylulose 5-phosphate (non-oxidative stage): step 2/3. Transaldolase is important for the balance of metabolites in the pentose-phosphate pathway. In Maridesulfovibrio salexigens (strain ATCC 14822 / DSM 2638 / NCIMB 8403 / VKM B-1763) (Desulfovibrio salexigens), this protein is Probable transaldolase.